We begin with the raw amino-acid sequence, 141 residues long: Small ribosomal subunit protein uS19 (141 aa).

Belongs to the universal ribosomal protein uS19 family.

Functionally, protein S19 forms a complex with S13 that binds strongly to the 16S ribosomal RNA. This chain is Small ribosomal subunit protein uS19, found in Thermofilum pendens (strain DSM 2475 / Hrk 5).